The chain runs to 92 residues: Acylphosphatase (92 aa).

Residues 5-92 form the Acylphosphatase-like domain; that stretch reads RWHLLVSGKV…QEFTDFRTTH (88 aa). Residues arginine 20 and asparagine 38 contribute to the active site.

Belongs to the acylphosphatase family.

It catalyses the reaction an acyl phosphate + H2O = a carboxylate + phosphate + H(+). In Marinobacter nauticus (strain ATCC 700491 / DSM 11845 / VT8) (Marinobacter aquaeolei), this protein is Acylphosphatase (acyP).